The sequence spans 123 residues: Small ribosomal subunit protein uS13 (123 aa).

Residues 95–123 are disordered; the sequence is GLPVRGQSSKTNARTRKGPRRSVMSRKKK. The span at 107-123 shows a compositional bias: basic residues; that stretch reads ARTRKGPRRSVMSRKKK.

Belongs to the universal ribosomal protein uS13 family. As to quaternary structure, part of the 30S ribosomal subunit. Forms a loose heterodimer with protein S19. Forms two bridges to the 50S subunit in the 70S ribosome.

Functionally, located at the top of the head of the 30S subunit, it contacts several helices of the 16S rRNA. In the 70S ribosome it contacts the 23S rRNA (bridge B1a) and protein L5 of the 50S subunit (bridge B1b), connecting the 2 subunits; these bridges are implicated in subunit movement. Contacts the tRNAs in the A and P-sites. This is Small ribosomal subunit protein uS13 from Maridesulfovibrio salexigens (strain ATCC 14822 / DSM 2638 / NCIMB 8403 / VKM B-1763) (Desulfovibrio salexigens).